A 538-amino-acid polypeptide reads, in one-letter code: Tetracenomycin C resistance and export protein (538 aa).

The next 14 membrane-spanning stretches (helical) occupy residues 28–48 (LLAV…VAIA), 65–85 (WITN…GKLG), 100–120 (GFAV…IVVF), 126–146 (LFGA…FPPG), 154–174 (IWSG…GLLV), 181–201 (AVFF…LVIL), 213–233 (FDVS…WGLI), 239–259 (GWGD…FAGF), 286–306 (VLMV…TFYL), 319–339 (VHLL…GIVI), 342–362 (FGPG…LWGM), 371–391 (MGIT…VMVG), 413–433 (QSAM…LMAS), and 494–514 (MGLA…VALF).

This sequence belongs to the major facilitator superfamily. EmrB family.

The protein localises to the cell membrane. It participates in antibiotic biosynthesis; tetracenomycin C biosynthesis. In terms of biological role, resistance to tetracenomycin C by an active tetracenomycin C efflux system which is probably energized by transmembrane electrochemical gradients. This Streptomyces glaucescens protein is Tetracenomycin C resistance and export protein (tcmA).